Reading from the N-terminus, the 285-residue chain is Methanethiol S-methyltransferase 1 (285 aa).

Transmembrane regions (helical) follow at residues Ala55–Val75, Ala88–Met108, Leu132–Ile152, Val162–Ile182, and Phe224–Val244.

Belongs to the nurim family.

The protein localises to the membrane. It catalyses the reaction methanethiol + S-adenosyl-L-methionine = dimethyl sulfide + S-adenosyl-L-homocysteine + H(+). Functionally, catalyzes the methylation of methanethiol (MeSH) to yield dimethylsulphide (DMS). This is Methanethiol S-methyltransferase 1 from Bradyrhizobium diazoefficiens (strain JCM 10833 / BCRC 13528 / IAM 13628 / NBRC 14792 / USDA 110).